We begin with the raw amino-acid sequence, 179 residues long: ATP synthase subunit delta (179 aa).

Belongs to the ATPase delta chain family. As to quaternary structure, F-type ATPases have 2 components, F(1) - the catalytic core - and F(0) - the membrane proton channel. F(1) has five subunits: alpha(3), beta(3), gamma(1), delta(1), epsilon(1). F(0) has three main subunits: a(1), b(2) and c(10-14). The alpha and beta chains form an alternating ring which encloses part of the gamma chain. F(1) is attached to F(0) by a central stalk formed by the gamma and epsilon chains, while a peripheral stalk is formed by the delta and b chains.

It is found in the cell membrane. Its function is as follows. F(1)F(0) ATP synthase produces ATP from ADP in the presence of a proton or sodium gradient. F-type ATPases consist of two structural domains, F(1) containing the extramembraneous catalytic core and F(0) containing the membrane proton channel, linked together by a central stalk and a peripheral stalk. During catalysis, ATP synthesis in the catalytic domain of F(1) is coupled via a rotary mechanism of the central stalk subunits to proton translocation. This protein is part of the stalk that links CF(0) to CF(1). It either transmits conformational changes from CF(0) to CF(1) or is implicated in proton conduction. In Clostridium perfringens (strain ATCC 13124 / DSM 756 / JCM 1290 / NCIMB 6125 / NCTC 8237 / Type A), this protein is ATP synthase subunit delta.